The primary structure comprises 842 residues: Elongation factor 2 (842 aa).

Residues 17–253 (TNVRNMSVIA…LWGDSYFNPK (237 aa)) enclose the tr-type G domain. Residues 26–33 (AHVDHGKS), 158–161 (NKVD), and 213–215 (SGL) each bind GTP. Diphthamide is present on His699.

This sequence belongs to the TRAFAC class translation factor GTPase superfamily. Classic translation factor GTPase family. EF-G/EF-2 subfamily.

Its subcellular location is the cytoplasm. The enzyme catalyses GTP + H2O = GDP + phosphate + H(+). Functionally, catalyzes the GTP-dependent ribosomal translocation step during translation elongation. During this step, the ribosome changes from the pre-translocational (PRE) to the post-translocational (POST) state as the newly formed A-site-bound peptidyl-tRNA and P-site-bound deacylated tRNA move to the P and E sites, respectively. Catalyzes the coordinated movement of the two tRNA molecules, the mRNA and conformational changes in the ribosome. The protein is Elongation factor 2 (EFT1) of Naumovozyma castellii (Yeast).